The primary structure comprises 375 residues: Succinyl-diaminopimelate desuccinylase (375 aa).

H66 serves as a coordination point for Zn(2+). D68 is an active-site residue. D99 contributes to the Zn(2+) binding site. Catalysis depends on E133, which acts as the Proton acceptor. Residues E134, E162, and H348 each coordinate Zn(2+).

The protein belongs to the peptidase M20A family. DapE subfamily. In terms of assembly, homodimer. It depends on Zn(2+) as a cofactor. Co(2+) serves as cofactor.

The catalysed reaction is N-succinyl-(2S,6S)-2,6-diaminopimelate + H2O = (2S,6S)-2,6-diaminopimelate + succinate. Its pathway is amino-acid biosynthesis; L-lysine biosynthesis via DAP pathway; LL-2,6-diaminopimelate from (S)-tetrahydrodipicolinate (succinylase route): step 3/3. Its function is as follows. Catalyzes the hydrolysis of N-succinyl-L,L-diaminopimelic acid (SDAP), forming succinate and LL-2,6-diaminopimelate (DAP), an intermediate involved in the bacterial biosynthesis of lysine and meso-diaminopimelic acid, an essential component of bacterial cell walls. The sequence is that of Succinyl-diaminopimelate desuccinylase from Serratia proteamaculans (strain 568).